Here is a 316-residue protein sequence, read N- to C-terminus: 4-hydroxy-3-methylbut-2-enyl diphosphate reductase (316 aa).

Cys12 provides a ligand contact to [4Fe-4S] cluster. (2E)-4-hydroxy-3-methylbut-2-enyl diphosphate-binding residues include His41 and His74. The dimethylallyl diphosphate site is built by His41 and His74. The isopentenyl diphosphate site is built by His41 and His74. Cys96 contributes to the [4Fe-4S] cluster binding site. Position 124 (His124) interacts with (2E)-4-hydroxy-3-methylbut-2-enyl diphosphate. His124 provides a ligand contact to dimethylallyl diphosphate. His124 serves as a coordination point for isopentenyl diphosphate. The Proton donor role is filled by Glu126. (2E)-4-hydroxy-3-methylbut-2-enyl diphosphate is bound at residue Thr167. Residue Cys197 coordinates [4Fe-4S] cluster. (2E)-4-hydroxy-3-methylbut-2-enyl diphosphate-binding residues include Ser225, Ser226, Asn227, and Ser269. Ser225, Ser226, Asn227, and Ser269 together coordinate dimethylallyl diphosphate. Isopentenyl diphosphate contacts are provided by Ser225, Ser226, Asn227, and Ser269.

This sequence belongs to the IspH family. As to quaternary structure, homodimer. Requires [4Fe-4S] cluster as cofactor.

It carries out the reaction isopentenyl diphosphate + 2 oxidized [2Fe-2S]-[ferredoxin] + H2O = (2E)-4-hydroxy-3-methylbut-2-enyl diphosphate + 2 reduced [2Fe-2S]-[ferredoxin] + 2 H(+). The enzyme catalyses dimethylallyl diphosphate + 2 oxidized [2Fe-2S]-[ferredoxin] + H2O = (2E)-4-hydroxy-3-methylbut-2-enyl diphosphate + 2 reduced [2Fe-2S]-[ferredoxin] + 2 H(+). The protein operates within isoprenoid biosynthesis; dimethylallyl diphosphate biosynthesis; dimethylallyl diphosphate from (2E)-4-hydroxy-3-methylbutenyl diphosphate: step 1/1. It functions in the pathway isoprenoid biosynthesis; isopentenyl diphosphate biosynthesis via DXP pathway; isopentenyl diphosphate from 1-deoxy-D-xylulose 5-phosphate: step 6/6. In terms of biological role, catalyzes the conversion of 1-hydroxy-2-methyl-2-(E)-butenyl 4-diphosphate (HMBPP) into a mixture of isopentenyl diphosphate (IPP) and dimethylallyl diphosphate (DMAPP). Acts in the terminal step of the DOXP/MEP pathway for isoprenoid precursor biosynthesis. In Salmonella paratyphi B (strain ATCC BAA-1250 / SPB7), this protein is 4-hydroxy-3-methylbut-2-enyl diphosphate reductase.